An 874-amino-acid polypeptide reads, in one-letter code: Bifunctional uridylyltransferase/uridylyl-removing enzyme (874 aa).

Residues 1-332 form a uridylyltransferase region; sequence MTLQSPLTFR…NGGASEDAEI (332 aa). A uridylyl-removing region spans residues 333 to 692; sequence IDEDFQRRGA…ISKKATRGGT (360 aa). One can recognise an HD domain in the interval 451-573; sequence VDEHSIRLLK…VRDEEYLEYL (123 aa). ACT domains are found at residues 693 to 777 and 800 to 874; these read EVFV…RTPN and LMEF…SVSA.

The protein belongs to the GlnD family. It depends on Mg(2+) as a cofactor.

The catalysed reaction is [protein-PII]-L-tyrosine + UTP = [protein-PII]-uridylyl-L-tyrosine + diphosphate. It carries out the reaction [protein-PII]-uridylyl-L-tyrosine + H2O = [protein-PII]-L-tyrosine + UMP + H(+). Its activity is regulated as follows. Uridylyltransferase (UTase) activity is inhibited by glutamine, while glutamine activates uridylyl-removing (UR) activity. Modifies, by uridylylation and deuridylylation, the PII regulatory proteins (GlnB and homologs), in response to the nitrogen status of the cell that GlnD senses through the glutamine level. Under low glutamine levels, catalyzes the conversion of the PII proteins and UTP to PII-UMP and PPi, while under higher glutamine levels, GlnD hydrolyzes PII-UMP to PII and UMP (deuridylylation). Thus, controls uridylylation state and activity of the PII proteins, and plays an important role in the regulation of nitrogen assimilation and metabolism. This chain is Bifunctional uridylyltransferase/uridylyl-removing enzyme, found in Vibrio campbellii (strain ATCC BAA-1116).